The primary structure comprises 227 residues: Ribose-5-phosphate isomerase A (227 aa).

Substrate is bound by residues Thr30–Thr33, Asp86–Asp89, and Lys99–Ala104. Glu108 acts as the Proton acceptor in catalysis. Lys126 provides a ligand contact to substrate.

It belongs to the ribose 5-phosphate isomerase family. As to quaternary structure, homodimer.

The enzyme catalyses aldehydo-D-ribose 5-phosphate = D-ribulose 5-phosphate. It functions in the pathway carbohydrate degradation; pentose phosphate pathway; D-ribose 5-phosphate from D-ribulose 5-phosphate (non-oxidative stage): step 1/1. Functionally, involved in the first step of the non-oxidative branch of the pentose phosphate pathway. It catalyzes the reversible conversion of ribose-5-phosphate to ribulose 5-phosphate. Can also act on D-ribose-5-diphosphate and D-ribose-5-triphosphate as substrate. The chain is Ribose-5-phosphate isomerase A from Thermus thermophilus (strain ATCC BAA-163 / DSM 7039 / HB27).